A 584-amino-acid chain; its full sequence is Endogenous retrovirus group FC1 Env polyprotein (584 aa).

The first 22 residues, 1–22, serve as a signal peptide directing secretion; sequence MARPSPLCLLLLLTLLPPIVPS. The Extracellular portion of the chain corresponds to 23-514; it reads NSLLTEPPFR…NYGGGWWQSP (492 aa). Residues asparagine 69 and asparagine 247 are each glycosylated (N-linked (GlcNAc...) asparagine). The CXXC signature appears at 251–254; the sequence is CFLC. N-linked (GlcNAc...) asparagine glycans are attached at residues asparagine 272, asparagine 276, asparagine 308, asparagine 313, asparagine 322, asparagine 334, asparagine 342, and asparagine 346. The fusion peptide stretch occupies residues 388–413; it reads PLVIGVSLTSSLVASGLGTGAIVHFI. The CKS-17 signature appears at 449–465; sequence MQNRRALDLLTADKGGT. Cysteine 466 and cysteine 473 are disulfide-bonded. Residues 466 to 474 carry the CX6CC motif; that stretch reads CMFLGEECC. An N-linked (GlcNAc...) asparagine glycan is attached at asparagine 478. The chain crosses the membrane as a helical span at residues 515–540; sequence LTTWIIPFISPILIICLLLLIAPCVL. Residues 541–584 lie on the Cytoplasmic side of the membrane; that stretch reads KFIKNRISEVSRVTVNQMLLHPYSRLPTSEDHYDVALTQQEAAR.

This sequence belongs to the gamma type-C retroviral envelope protein family. HERV class-I F(c)1 env subfamily. In terms of assembly, the surface (SU) and transmembrane (TM) proteins form a heterodimer. SU and TM are attached by noncovalent interactions or by a labile interchain disulfide bond. Post-translationally, specific enzymatic cleavages in vivo yield the mature SU and TM proteins. In terms of processing, the CXXC motif is highly conserved across a broad range of retroviral envelope proteins. It is thought to participate in the formation of a labile disulfide bond possibly with the CX6CC motif present in the transmembrane protein.

The protein localises to the virion. Its subcellular location is the cell membrane. Its function is as follows. Retroviral envelope proteins mediate receptor recognition and membrane fusion during early infection. Endogenous envelope proteins may have kept, lost or modified their original function during evolution. This endogenous envelope protein has lost its original fusogenic properties. Functionally, SU mediates receptor recognition. TM anchors the envelope heterodimer to the viral membrane through one transmembrane domain. The other hydrophobic domain, called fusion peptide, mediates fusion of the viral membrane with the target cell membrane. The sequence is that of Endogenous retrovirus group FC1 Env polyprotein (ERVFC1) from Pan troglodytes (Chimpanzee).